Consider the following 561-residue polypeptide: SH3 domain-binding protein 2 (561 aa).

Positions 26–130 constitute a PH domain; the sequence is GVAKAGYLHK…WMALLRREIG (105 aa). Disordered regions lie at residues 160–316 and 333–451; these read VDIS…GACS and KLKS…YEKV. The span at 170-188 shows a compositional bias: acidic residues; it reads DNEDYEHDDEDDSYLEPDS. Residues tyrosine 174 and tyrosine 183 each carry the phosphotyrosine; by SYK modification. Residues 201–210 carry the SH3-binding motif; sequence PPAYPPPPVP. 2 stretches are compositionally biased toward pro residues: residues 202 to 213 and 233 to 242; these read PAYPPPPVPTPR and PLLPPPPPKH. Residues 252–266 are compositionally biased toward basic and acidic residues; that stretch reads EDSKRDPLCPRRAEP. A Phosphoserine modification is found at serine 278. Pro residues predominate over residues 342 to 354; sequence RGPPTSEPPPVPA. Residues serine 416 and serine 427 each carry the phosphoserine modification. Tyrosine 448 carries the post-translational modification Phosphotyrosine; by SYK. The SH2 domain occupies 457 to 555; the sequence is VFVNTTESCE…HQSLLLRHPY (99 aa).

In terms of processing, phosphorylated. Phosphorylation at Tyr-448 may stimulate the activity of the LYN kinase. Expressed in a variety of tissues including lung, liver, skeletal muscle, kidney and pancreas.

Functionally, binds differentially to the SH3 domains of certain proteins of signal transduction pathways. Binds to phosphatidylinositols; linking the hemopoietic tyrosine kinase fes to the cytoplasmic membrane in a phosphorylation dependent mechanism. The sequence is that of SH3 domain-binding protein 2 (SH3BP2) from Homo sapiens (Human).